The primary structure comprises 163 residues: Nucleotide-binding protein ESA_02876 (163 aa).

The protein belongs to the YajQ family.

In terms of biological role, nucleotide-binding protein. This chain is Nucleotide-binding protein ESA_02876, found in Cronobacter sakazakii (strain ATCC BAA-894) (Enterobacter sakazakii).